Reading from the N-terminus, the 472-residue chain is Ribosomal protein uS12 methylthiotransferase RimO (472 aa).

Residues 33-143 enclose the MTTase N-terminal domain; it reads NRIGFVSLGC…VLKHVHKYVP (111 aa). Positions 42, 78, 107, 175, 179, and 182 each coordinate [4Fe-4S] cluster. The region spanning 161-398 is the Radical SAM core domain; the sequence is LTPKHYAYLK…MEVQAEISAE (238 aa). The 67-residue stretch at 401-467 folds into the TRAM domain; the sequence is ARFVGRTLDI…EHDLWAEVVD (67 aa).

It belongs to the methylthiotransferase family. RimO subfamily. Requires [4Fe-4S] cluster as cofactor.

It is found in the cytoplasm. It catalyses the reaction L-aspartate(89)-[ribosomal protein uS12]-hydrogen + (sulfur carrier)-SH + AH2 + 2 S-adenosyl-L-methionine = 3-methylsulfanyl-L-aspartate(89)-[ribosomal protein uS12]-hydrogen + (sulfur carrier)-H + 5'-deoxyadenosine + L-methionine + A + S-adenosyl-L-homocysteine + 2 H(+). Catalyzes the methylthiolation of an aspartic acid residue of ribosomal protein uS12. The polypeptide is Ribosomal protein uS12 methylthiotransferase RimO (Shewanella baltica (strain OS185)).